The primary structure comprises 129 residues: Small ribosomal subunit protein uS11 (129 aa).

The protein belongs to the universal ribosomal protein uS11 family. Part of the 30S ribosomal subunit. Interacts with proteins S7 and S18. Binds to IF-3.

In terms of biological role, located on the platform of the 30S subunit, it bridges several disparate RNA helices of the 16S rRNA. Forms part of the Shine-Dalgarno cleft in the 70S ribosome. The protein is Small ribosomal subunit protein uS11 of Yersinia enterocolitica serotype O:8 / biotype 1B (strain NCTC 13174 / 8081).